The sequence spans 874 residues: AP-1 complex subunit gamma-1 (874 aa).

The GAE domain maps to 761–873; it reads TVAKSHTVYT…QDQTDWAQPS (113 aa).

This sequence belongs to the adaptor complexes large subunit family. As to quaternary structure, adaptor protein complex 1 (AP-1) is a heterotetramer composed of two large adaptins (gamma-type subunit APL4 and beta-type subunit APL2), a medium adaptin (mu-type subunit APM1) and a small adaptin (sigma-type subunit APS1). AP-1 interacts with clathrin.

It is found in the cytoplasmic vesicle. Its subcellular location is the clathrin-coated vesicle membrane. It localises to the golgi apparatus. Functionally, adaptins are components of the adaptor complexes which link clathrin to receptors in coated vesicles. Clathrin-associated protein complexes are believed to interact with the cytoplasmic tails of membrane proteins, leading to their selection and concentration. The AP-1 complex interacts directly with clathrin. Required for apical growth extension. This chain is AP-1 complex subunit gamma-1 (APL4), found in Mycosarcoma maydis (Corn smut fungus).